Reading from the N-terminus, the 223-residue chain is Capsid protein (223 aa).

Basic and acidic residues predominate over residues 1-19; sequence MDDETKKLKNKNKETKEGD. Residues 1-21 are disordered; that stretch reads MDDETKKLKNKNKETKEGDDV.

The protein belongs to the closteroviridae capsid protein family. Consists of at least two size variants, CP1 and CP2, which result of post-translational proteolysis at sites approximately 12 to 15 and 26 AA from the N-terminus respectively.

The protein resides in the virion. The chain is Capsid protein from Citrus tristeza virus (isolate T36) (CTV).